The following is a 389-amino-acid chain: Cuticlin-3 (389 aa).

An N-terminal signal peptide occupies residues 1–19 (MARYSLGLGLCLLVASVSA). Residues 20–354 (IPVDNNVEGE…ELCISSFHIS (335 aa)) are Extracellular-facing. The region spanning 33–278 (ECGPTSITVN…PTCSEPQGFG (246 aa)) is the ZP domain. An N-linked (GlcNAc...) asparagine glycan is attached at Asn-284. Residues 355–375 (VVTVFLGLTVFVAIFITYMIV) form a helical membrane-spanning segment. The Cytoplasmic portion of the chain corresponds to 376-389 (SRMMVPSDKMQSAC).

Its subcellular location is the cell membrane. Plays a role in alae formation in L1 larvae. This chain is Cuticlin-3, found in Caenorhabditis elegans.